A 234-amino-acid chain; its full sequence is Segregation and condensation protein A (234 aa).

This sequence belongs to the ScpA family. Component of a cohesin-like complex composed of ScpA, ScpB and the Smc homodimer, in which ScpA and ScpB bind to the head domain of Smc. The presence of the three proteins is required for the association of the complex with DNA.

Its subcellular location is the cytoplasm. Functionally, participates in chromosomal partition during cell division. May act via the formation of a condensin-like complex containing Smc and ScpB that pull DNA away from mid-cell into both cell halves. This is Segregation and condensation protein A from Streptococcus pyogenes serotype M6 (strain ATCC BAA-946 / MGAS10394).